Consider the following 239-residue polypeptide: 1-(5-phosphoribosyl)-5-[(5-phosphoribosylamino)methylideneamino] imidazole-4-carboxamide isomerase (239 aa).

D8 (proton acceptor) is an active-site residue. Catalysis depends on D130, which acts as the Proton donor.

Belongs to the HisA/HisF family.

The protein resides in the cytoplasm. It catalyses the reaction 1-(5-phospho-beta-D-ribosyl)-5-[(5-phospho-beta-D-ribosylamino)methylideneamino]imidazole-4-carboxamide = 5-[(5-phospho-1-deoxy-D-ribulos-1-ylimino)methylamino]-1-(5-phospho-beta-D-ribosyl)imidazole-4-carboxamide. It functions in the pathway amino-acid biosynthesis; L-histidine biosynthesis; L-histidine from 5-phospho-alpha-D-ribose 1-diphosphate: step 4/9. This is 1-(5-phosphoribosyl)-5-[(5-phosphoribosylamino)methylideneamino] imidazole-4-carboxamide isomerase from Lachnoclostridium phytofermentans (strain ATCC 700394 / DSM 18823 / ISDg) (Clostridium phytofermentans).